We begin with the raw amino-acid sequence, 57 residues long: Neurotoxin Oh9-1 (57 aa).

4 disulfide bridges follow: Cys-3–Cys-19, Cys-12–Cys-37, Cys-41–Cys-49, and Cys-50–Cys-55.

The protein belongs to the three-finger toxin family. Short-chain subfamily. Expressed by the venom gland.

The protein localises to the secreted. Its function is as follows. This toxin binds and inhibits rat muscle adult alpha-1-beta-1-delta-epsilon/CHRNA1-CHRNB1-CHRND-CHRNE (IC(50)=3.1 uM) and fetal alpha-1-beta-1-gamma-delta/CHRNA1-CHRNB1-CHRNG-CHRND (IC(50)=5.6 uM) nicotinic acetylcholine receptors (nAChR). Shows a very low inhibition on rat neuronal alpha-3-beta-2/CHRNA3-CHRNB2 nAChR (IC(50)=50.2 uM) nAChR. Binds to the acetylcholine-binding pocket and acts as a competitive antagonist. Does not inhibit human glycine receptor (homopentamer composed of alpha-1 subunits, GLRA1), but seems to potentiate it (about 2-fold increased activity). In Ophiophagus hannah (King cobra), this protein is Neurotoxin Oh9-1.